We begin with the raw amino-acid sequence, 350 residues long: 3-dehydroquinate synthase (350 aa).

NAD(+)-binding positions include Gly106 to Asp110, Thr130 to Ser131, Lys143, and Lys152. Zn(2+) is bound by residues Glu185, His246, and His263.

It belongs to the sugar phosphate cyclases superfamily. Dehydroquinate synthase family. The cofactor is Co(2+). Zn(2+) serves as cofactor. NAD(+) is required as a cofactor.

It localises to the cytoplasm. It carries out the reaction 7-phospho-2-dehydro-3-deoxy-D-arabino-heptonate = 3-dehydroquinate + phosphate. Its pathway is metabolic intermediate biosynthesis; chorismate biosynthesis; chorismate from D-erythrose 4-phosphate and phosphoenolpyruvate: step 2/7. In terms of biological role, catalyzes the conversion of 3-deoxy-D-arabino-heptulosonate 7-phosphate (DAHP) to dehydroquinate (DHQ). In Clostridium beijerinckii (strain ATCC 51743 / NCIMB 8052) (Clostridium acetobutylicum), this protein is 3-dehydroquinate synthase.